We begin with the raw amino-acid sequence, 480 residues long: Ribosomal protein uS12 methylthiotransferase RimO (480 aa).

The 122-residue stretch at 14-135 (LSVAMVTLGC…IAARLRSIVA (122 aa)) folds into the MTTase N-terminal domain. Positions 23, 59, 98, 193, 197, and 200 each coordinate [4Fe-4S] cluster. One can recognise a Radical SAM core domain in the interval 179-410 (LDDGPTAALK…DLVEELTSQR (232 aa)). Positions 412 to 480 (AERLGEQVEV…EGADLDARPL (69 aa)) constitute a TRAM domain.

The protein belongs to the methylthiotransferase family. RimO subfamily. [4Fe-4S] cluster is required as a cofactor.

It is found in the cytoplasm. It catalyses the reaction L-aspartate(89)-[ribosomal protein uS12]-hydrogen + (sulfur carrier)-SH + AH2 + 2 S-adenosyl-L-methionine = 3-methylsulfanyl-L-aspartate(89)-[ribosomal protein uS12]-hydrogen + (sulfur carrier)-H + 5'-deoxyadenosine + L-methionine + A + S-adenosyl-L-homocysteine + 2 H(+). Functionally, catalyzes the methylthiolation of an aspartic acid residue of ribosomal protein uS12. The sequence is that of Ribosomal protein uS12 methylthiotransferase RimO from Nocardioides sp. (strain ATCC BAA-499 / JS614).